The sequence spans 157 residues: Transcription elongation factor GreA (157 aa).

Residues 13-75 (RARLEAELEE…EIKSILARAQ (63 aa)) adopt a coiled-coil conformation.

It belongs to the GreA/GreB family.

Necessary for efficient RNA polymerase transcription elongation past template-encoded arresting sites. The arresting sites in DNA have the property of trapping a certain fraction of elongating RNA polymerases that pass through, resulting in locked ternary complexes. Cleavage of the nascent transcript by cleavage factors such as GreA or GreB allows the resumption of elongation from the new 3'terminus. GreA releases sequences of 2 to 3 nucleotides. This is Transcription elongation factor GreA from Roseiflexus castenholzii (strain DSM 13941 / HLO8).